The chain runs to 394 residues: Elongation factor Tu 1 (394 aa).

Residues K10–A204 enclose the tr-type G domain. The tract at residues G19–T26 is G1. G19–T26 serves as a coordination point for GTP. T26 is a binding site for Mg(2+). The tract at residues G60–N64 is G2. Residues D81–G84 are G3. GTP is bound by residues D81–H85 and N136–D139. Residues N136–D139 form a G4 region. The G5 stretch occupies residues S174–L176.

Belongs to the TRAFAC class translation factor GTPase superfamily. Classic translation factor GTPase family. EF-Tu/EF-1A subfamily. In terms of assembly, monomer.

It is found in the cytoplasm. The catalysed reaction is GTP + H2O = GDP + phosphate + H(+). Functionally, GTP hydrolase that promotes the GTP-dependent binding of aminoacyl-tRNA to the A-site of ribosomes during protein biosynthesis. In Shewanella frigidimarina (strain NCIMB 400), this protein is Elongation factor Tu 1.